The sequence spans 737 residues: SANT and BTB domain regulator of class switch recombination (737 aa).

The SANT domain maps to 21–59; it reads DMILYPLIGIPQTINWETVARLVPGLTPKECVKRFDELK. Residues 147–255 enclose the BTB domain; that stretch reads MVIHVCDEAK…QCIQYCHKNM (109 aa). A compositionally biased stretch (acidic residues) spans 555-576; it reads SEEEEYTTGSEVTEDEVGDEEE. The interval 555–618 is disordered; the sequence is SEEEEYTTGS…TLEKSTSRDV (64 aa). Residues 580–595 show a composition bias toward basic residues; sequence KQRKKEKPKKFTKPPK. Over residues 604 to 615 the composition is skewed to basic and acidic residues; it reads QKKEKTLEKSTS.

This sequence belongs to the KIAA1841 family. Homodimer. Interacts (via the BTB domain) with HDAC1 and NCOR2.

Negatively regulates class switch recombination or isotype switching in splenic B-cells. This chain is SANT and BTB domain regulator of class switch recombination, found in Rattus norvegicus (Rat).